The chain runs to 115 residues: uncharacterized protein (115 aa).

The next 3 membrane-spanning stretches (helical) occupy residues leucine 23–alanine 43, alanine 63–valine 83, and asparagine 90–alanine 110.

The protein localises to the cell membrane. This is an uncharacterized protein from Mycobacterium bovis (strain ATCC BAA-935 / AF2122/97).